The chain runs to 97 residues: Bacterial microcompartment shell protein EutM (97 aa).

The BMC domain maps to 3 to 87 (ALGMIETRGL…PHGDLEEVFP (85 aa)).

Belongs to the bacterial microcompartments protein family. Homohexamer with a central pore of up to 8.6 Angstroms diameter. The hexamers pack into a two-dimensional array. Interacts with EutQ.

The protein resides in the bacterial microcompartment. It functions in the pathway amine and polyamine degradation; ethanolamine degradation. Its function is as follows. Probably a major component of the bacterial microcompartment (BMC) shell dedicated to ethanolamine degradation. Each homohexamer has a central pore with an opening of up to 8.6 Angstroms. A positively-charged funnel leads to the pore from each side of the hexamer. The pore probably allows metabolite passage into and out of the BMC. This chain is Bacterial microcompartment shell protein EutM (eutM), found in Escherichia coli O6:H1 (strain CFT073 / ATCC 700928 / UPEC).